Consider the following 457-residue polypeptide: Putative HD domain-containing protein L394 (457 aa).

One can recognise an HD domain in the interval 65 to 206; it reads RLEHSIGVYD…GIDVDKFDYL (142 aa).

This chain is Putative HD domain-containing protein L394, found in Acanthamoeba polyphaga mimivirus (APMV).